Here is a 441-residue protein sequence, read N- to C-terminus: Protein cortex (441 aa).

WD repeat units lie at residues 110–148 (SITS…VDQG), 149–187 (QTMF…QFVQ), 193–233 (IQIC…KSLV), 235–276 (IEGA…RFMK), 277–320 (TNEI…KLRQ), 345–379 (SLWS…ESHT), and 380–420 (GLNR…KILA). The D-box motif lies at 379–390 (TGLNRIRTMVFS).

It belongs to the WD repeat CORT family.

Its subcellular location is the cytoplasm. Its function is as follows. Controls wing pigmentation patterning, possibly by regulating scale cell development. Probably acts as an activator of the anaphase promoting complex/cyclosome (APC/C) that promotes the ubiquitin ligase activity and substrate specificity of the APC/C. This chain is Protein cortex, found in Biston betularia (Pepper-and-salt geometer moth).